A 7119-amino-acid polypeptide reads, in one-letter code: Replicase polyprotein 1ab (7119 aa).

A CoV Nsp1 globular domain is found at 25 to 151 (RSDHVACTVP…EYTFLLRKNG (127 aa)). The BetaCoV Nsp1 C-terminal domain maps to 167–195 (TPYVEILDDLEADPTGKYSQNLLKKLIGG). Positions 197–472 (CIPIDQYMCG…WDKVVETANL (276 aa)) constitute a CoV Nsp2 N-terminal domain. Zn(2+) contacts are provided by Cys-339, Cys-342, Cys-358, and Cys-360. The segment at 339 to 360 (CNACGRGTWCTGNAIQGFACDC) is C4. The CoV Nsp2 middle domain maps to 478 to 712 (QRSLNFCQQF…LDIMSKAMKL (235 aa)). The CoV Nsp2 C-terminal domain occupies 714–847 (HTNVSWAGTK…VSTLFRLKGG (134 aa)). A Ubiquitin-like 1 domain is found at 851 to 960 (KKVTFGDVNT…MTFSINPVED (110 aa)). 2 Macro domains span residues 1152-1321 (DLSK…KPDG) and 1322-1446 (LVYS…AIQT). The DPUP domain occupies 1446–1519 (TPETAFINNV…LEACRAYLTS (74 aa)). Residues 1524 to 1579 (QVNIEVLVTIDGVNFRTVILNDTTTFRKQLGATFYKGVDISDAFPTVKMGGESLFV) enclose the Ubiquitin-like 2 domain. The region spanning 1593 to 1864 (EYYGTSDVTF…KVEVNPDLSN (272 aa)) is the Peptidase C16 domain. Cys-1634 acts as the For PL-PRO activity in catalysis. Zn(2+) is bound by residues Cys-1714, Cys-1717, Cys-1749, and Cys-1751. The C4-type zinc finger occupies 1714 to 1751 (CTVCGIRDIEYTGMRACVYAGVNSMEELQSVFNETCVC). Catalysis depends on for PL-PRO activity residues His-1800 and Asp-1815. Residues 1878-1995 (TIKYSPATIL…QLYDVAPIVL (118 aa)) form the Nucleic acid-binding domain. The region spanning 2012 to 2133 (HNVPVVDDVP…AKITVTATTA (122 aa)) is the G2M domain. The next 3 helical transmembrane spans lie at 2112–2132 (VLLGASSLFASFAKITVTATT), 2145–2165 (FVVNYGVLQNMFVFLKMLFFL), and 2222–2242 (LFLLLCTTILLLSSIYHLVLF). Positions 2112–2395 (VLLGASSLFA…VTHIPLHGLV (284 aa)) are HD1. The 3Ecto domain occupies 2259–2325 (LAIYKEVRSY…LQMLQTHITS (67 aa)). 2 disulfides stabilise this stretch: Cys-2275/Cys-2303 and Cys-2293/Cys-2300. A run of 3 helical transmembrane segments spans residues 2326–2346 (YVLNIDWIWFALEFFLAYVLY), 2350–2370 (FNVLLLVVTAQYFFAYTSAFV), and 2375–2395 (YNYIVSGLFFLVTHIPLHGLV). The Y1 stretch occupies residues 2409 to 2499 (KFYSHVINGC…TLRRLIKPTD (91 aa)). Residues 2409 to 2782 (KFYSHVINGC…LSVKFSATKI (374 aa)) enclose the CoV Nsp3 Y domain. His-2413, Cys-2418, Cys-2423, Cys-2426, Cys-2459, His-2462, Cys-2466, and Cys-2469 together coordinate Zn(2+). A ZF1 region spans residues 2413–2426 (HVINGCKDTACLLC). Positions 2459–2469 (CCKHNWNCVEC) are ZF2. A Y2 region spans residues 2500–2598 (QSHYYVDSVV…LVDVNLVTTV (99 aa)). Residues 2500-2782 (QSHYYVDSVV…LSVKFSATKI (283 aa)) are coV-Y. The Y3 stretch occupies residues 2599–2681 (GDSREIAIKM…DALQYAHKND (83 aa)). A Y4 region spans residues 2682-2782 (IQLTTECYNN…LSVKFSATKI (101 aa)). 4 consecutive transmembrane segments (helical) span residues 2800-2820 (GYCILTLFVFTVAVLSWFCLP), 3072-3092 (STSLAMGLVLCVFLTAAFYYI), 3105-3125 (CAVVAVVAALLNSLCLCFIVA), and 3149-3169 (AFIMHISWYVMFGAVVPIWML). Positions 2800–3169 (GYCILTLFVF…FGAVVPIWML (370 aa)) are HD2. The Nsp4C domain occupies 3195 to 3291 (VFTDGKLNCS…NCSVTSSVLQ (97 aa)). Residues 3292 to 3597 (SGLVKMSAPS…NMQVMGVVMQ (306 aa)) form the Peptidase C30 domain. Catalysis depends on for 3CL-PRO activity residues His-3332 and Cys-3439. 7 consecutive transmembrane segments (helical) span residues 3603–3623 (ISYGFIHWLISTFVLAYVSVM), 3637–3657 (TIPTQMTPLLLGFMACVMFTV), 3662–3682 (TFMSLFLLPVALCLTYANIVY), 3707–3727 (RTTHFDFGLYISLSFVLAIIV), 3735–3755 (MSNLALALCSGVMWFYTYVIG), 3784–3804 (LAKFISGLVFFYAPHLGFILP), and 3808–3828 (LVLLIYLGLGYMCTMYFGVFS). The tract at residues 3603–3828 (ISYGFIHWLI…MCTMYFGVFS (226 aa)) is HD3. Residues 3890–3972 (SKLTDLKCTS…DLFENSSVLQ (83 aa)) enclose the RdRp Nsp7 cofactor domain. The region spanning 3973 to 4171 (ATLTEFSHLA…RSSSSAVKLQ (199 aa)) is the RdRp Nsp8 cofactor domain. A Nsp9 ssRNA-binding domain is found at 4172–4281 (NNEIHPKGLK…GHIAATVRLQ (110 aa)). The 139-residue stretch at 4282-4420 (AGANTEFASN…DALRNNTVPQ (139 aa)) folds into the ExoN/MTase coactivator domain. Positions 4355, 4358, 4364, 4371, 4397, 4400, 4408, and 4410 each coordinate Zn(2+). 2 zinc fingers span residues 4355-4371 (CLYCRAHIEHPDVSGVC) and 4397-4410 (CNVCQYWVGYGCNC). The 258-residue stretch at 4426 to 4683 (FLNRVRGSSV…AAETHKDCDF (258 aa)) folds into the NiRAN domain. Mn(2+) contacts are provided by Asn-4631 and Asp-4640. The Nsp12 Interface domain maps to 4688 to 4786 (IEWPLLEYDY…MNMDFNIHRH (99 aa)). Positions 4717, 4723, 4728, 4732, and 4909 each coordinate Zn(2+). Residues 4787 to 5354 (RLALKELMMY…DLYSSPTTLQ (568 aa)) form the Nsp12 RNA-dependent RNA polymerase domain. Residues 4789-5003 (ALKELMMYAA…HQKMLKSMAA (215 aa)) are rdRp Fingers N-ter. A rdRp Palm N-ter region spans residues 5004 to 5042 (TRGATCVIGTTKFYGGWDFMLKTLYKDVESPHLMGWDYP). A RdRp catalytic domain is found at 5034–5196 (PHLMGWDYPK…CYNSDYAAKG (163 aa)). The rdRp Fingers C-ter stretch occupies residues 5043–5101 (KCDRAMPNMCRILASLILARKHSTCCTNSDRFYRLANECAQVLSEYVLCGGGYYVKPGG). 3 residues coordinate Zn(2+): His-5064, Cys-5067, and Cys-5068. The segment at 5102–5237 (TSSGDATTAY…EKGPHEFCSQ (136 aa)) is rdRp Palm C-ter. Catalysis depends on residues Ser-5181, Asp-5182, and Asp-5183. Residues 5238–5354 (HTLYIKDGDD…DLYSSPTTLQ (117 aa)) form a rdRp Thumb region. The CV ZBD domain maps to 5355-5467 (AVGSCVVCHS…MEFNRLATCD (113 aa)). Zn(2+)-binding residues include Cys-5359, Cys-5362, Cys-5370, Cys-5373, Cys-5380, Cys-5383, His-5387, His-5393, Cys-5404, Cys-5409, Cys-5426, and His-5429. The (+)RNA virus helicase ATP-binding domain maps to 5611–5792 (TVPEEFANHV…MCNLGPDIFL (182 aa)). 5636 to 5643 (GPPGTGKS) is an ATP binding site. The (+)RNA virus helicase C-terminal domain occupies 5793-5967 (SVCYRCPKEI…GLFKDCSRED (175 aa)). Residues 6024–6239 (LFITRDEAIR…RCLAIYDCFI (216 aa)) enclose the ExoN domain. Catalysis depends on residues Asp-6042, Glu-6044, and Glu-6143. Residues Cys-6159, Cys-6162, Cys-6178, His-6181, His-6209, Cys-6213, and His-6216 each coordinate Zn(2+). Residues His-6220 and Asp-6225 contribute to the active site. Cys-6231 provides a ligand contact to Zn(2+). One can recognise an N7-MTase domain in the interval 6248–6475 (YPYISHEQKL…NLWSTFVKVQ (228 aa)). An S-adenosyl-L-methionine-binding site is contributed by 6283–6289 (DIGNPKG). The segment at 6361–6375 (CNGGSLYVNKHAFHT) is gpppA-binding. Cys-6399, Cys-6421, Cys-6432, and His-6435 together coordinate Zn(2+). The Nsp15 N-terminal oligomerization domain maps to 6476-6536 (GLENIAFNVI…NVAFELYAKR (61 aa)). Residues 6537 to 6658 (AVRSHPDLNL…LYKKVNNEFV (122 aa)) form the AV-Nsp11N/CoV-Nsp15M domain. A NendoU domain is found at 6675-6814 (TVLTPMEEDF…RDGKVQTFYP (140 aa)). Residues His-6705, His-6720, Lys-6760, Lys-6863, Asp-6947, Lys-6987, and Glu-7020 contribute to the active site. One can recognise a Nidovirus-type SAM-dependent 2'-O-MTase domain in the interval 6819–7113 (TNDWKPGLTM…TLNVSTDVLV (295 aa)).

It belongs to the coronaviruses polyprotein 1ab family. Interacts with host PHB and PHB2. In terms of assembly, interacts with papain-like protease nsp3 and non-structural protein 6. As to quaternary structure, monomer. Homodimer. Only the homodimer shows catalytic activity. Interacts with nsp8 and nsp12 to form the replication-transcription complex (RTC): nsp12, nsp7, two subunits of nsp8, and up to two subunits of nsp13. In terms of assembly, interacts with nsp7, nsp13 and nsp12 to form the replication-transcription complex (RTC): nsp12, nsp7, two subunits of nsp8, and up to two subunits of nsp13. As to quaternary structure, interacts with nsp12. Interacts with proofreading exoribonuclease nsp14 and 2'-O-methyltransferase nsp16; these interactions enhance nsp14 and nsp16 enzymatic activities. In terms of assembly, interacts with nsp7 and nsp8 to form the replication-transcription complex (RTC): nsp12, nsp7, two subunits of nsp8, and up to two subunits of nsp13. Interacts with nsp9. As to quaternary structure, interacts with nsp8 to form the replication-transcription complex (RTC): nsp12, nsp7, two subunits of nsp8, and up to two subunits of nsp13. Mn(2+) serves as cofactor. Requires Mg(2+) as cofactor. In terms of processing, specific enzymatic cleavages in vivo by its own proteases yield mature proteins. 3CL-PRO and PL-PRO proteinases are autocatalytically processed.

Its subcellular location is the host membrane. The protein resides in the host cytoplasm. It localises to the host perinuclear region. It is found in the host endoplasmic reticulum-Golgi intermediate compartment. The enzyme catalyses RNA(n) + a ribonucleoside 5'-triphosphate = RNA(n+1) + diphosphate. It catalyses the reaction ATP + H2O = ADP + phosphate + H(+). The catalysed reaction is Thiol-dependent hydrolysis of ester, thioester, amide, peptide and isopeptide bonds formed by the C-terminal Gly of ubiquitin (a 76-residue protein attached to proteins as an intracellular targeting signal).. It carries out the reaction a 5'-end (N(7)-methyl 5'-triphosphoguanosine)-ribonucleoside in mRNA + S-adenosyl-L-methionine = a 5'-end (N(7)-methyl 5'-triphosphoguanosine)-(2'-O-methyl-ribonucleoside) in mRNA + S-adenosyl-L-homocysteine + H(+). The enzyme catalyses uridylyl-uridylyl-ribonucleotide-RNA = a 3'-end uridylyl-2',3'-cyclophospho-uridine-RNA + a 5'-end dephospho-ribonucleoside-RNA. It catalyses the reaction a 5'-end diphospho-ribonucleoside in mRNA + GTP + H(+) = a 5'-end (5'-triphosphoguanosine)-ribonucleoside in mRNA + diphosphate. The catalysed reaction is a 5'-end (5'-triphosphoguanosine)-ribonucleoside in mRNA + S-adenosyl-L-methionine = a 5'-end (N(7)-methyl 5'-triphosphoguanosine)-ribonucleoside in mRNA + S-adenosyl-L-homocysteine. The replicase polyprotein of coronaviruses is a multifunctional protein: it contains the activities necessary for the transcription of negative stranded RNA, leader RNA, subgenomic mRNAs and progeny virion RNA as well as proteinases responsible for the cleavage of the polyprotein into functional products. In terms of biological role, inhibits host translation by interacting with the 40S ribosomal subunit. The nsp1-40S ribosome complex further induces an endonucleolytic cleavage near the 5'UTR of host mRNAs, targeting them for degradation. Viral mRNAs are not susceptible to nsp1-mediated endonucleolytic RNA cleavage thanks to the presence of a 5'-end leader sequence and are therefore protected from degradation. By suppressing host gene expression, nsp1 facilitates efficient viral gene expression in infected cells and evasion from host immune response. Its function is as follows. May play a role in the modulation of host cell survival signaling pathway by interacting with host PHB and PHB2. Indeed, these two proteins play a role in maintaining the functional integrity of the mitochondria and protecting cells from various stresses. Functionally, responsible for the cleavages located at the N-terminus of the replicase polyprotein. In addition, PL-PRO possesses a deubiquitinating/deISGylating activity and processes both 'Lys-48'- and 'Lys-63'-linked polyubiquitin chains from cellular substrates. Participates together with nsp4 in the assembly of virally-induced cytoplasmic double-membrane vesicles necessary for viral replication. Antagonizes innate immune induction of type I interferon by blocking the phosphorylation, dimerization and subsequent nuclear translocation of host IRF3. Also prevents host NF-kappa-B signaling. Participates in the assembly of virally-induced cytoplasmic double-membrane vesicles necessary for viral replication. In terms of biological role, cleaves the C-terminus of replicase polyprotein at 11 sites. Recognizes substrates containing the core sequence [ILMVF]-Q-|-[SGACN]. Also able to bind an ADP-ribose-1''-phosphate (ADRP). Its function is as follows. Plays a role in the initial induction of autophagosomes from host endoplasmic reticulum. Later, limits the expansion of these phagosomes that are no longer able to deliver viral components to lysosomes. Functionally, forms a hexadecamer with nsp8 (8 subunits of each) that may participate in viral replication by acting as a primase. Alternatively, may synthesize substantially longer products than oligonucleotide primers. Forms a hexadecamer with nsp7 (8 subunits of each) that may participate in viral replication by acting as a primase. Alternatively, may synthesize substantially longer products than oligonucleotide primers. In terms of biological role, forms a primer, NSP9-pU, which is utilized by the polymerase for the initiation of RNA chains. Interacts with ribosome signal recognition particle RNA (SRP). Together with NSP8, suppress protein integration into the cell membrane, thereby disrupting host immune defenses. Its function is as follows. Plays a pivotal role in viral transcription by stimulating both nsp14 3'-5' exoribonuclease and nsp16 2'-O-methyltransferase activities. Therefore plays an essential role in viral mRNAs cap methylation. Functionally, RNA-directed RNA polymerase that catalyzes the transcription of viral genomic and subgenomic RNAs. Acts in complex with nsp7 and nsp8 to transcribe both the minus and positive strands of genomic RNA. The kinase-like NiRAN domain of NSP12 attaches one or more nucleotides to the amino terminus of NSP9, forming a covalent RNA-protein intermediate that serves as transcription/replication primer. Subgenomic RNAs (sgRNAs) are formed by discontinuous transcription: The polymerase has the ability to pause at transcription-regulating sequences (TRS) and jump to the leader TRS, resulting in a major deletion. This creates a series of subgenomic RNAs that are replicated, transcribed and translated. In addition, Nsp12 is a subunit of the viral RNA capping enzyme that catalyzes the RNA guanylyltransferase reaction for genomic and sub-genomic RNAs. Subsequently, the NiRAN domain transfers RNA to GDP, and forms the core cap structure GpppA-RNA. RNA-directed RNA polymerase that catalyzes the transcription of viral genomic and subgenomic RNAs. Acts in complex with nsp7 and nsp8 to transcribe both the minus and positive strands of genomic RNA. Subgenomic RNAs (sgRNAs) are formed by discontinuous transcription: The polymerase has the ability to pause at transcription-regulating sequences (TRS) and jump to the leader TRS, resulting in a major deletion. This creates a series of subgenomic RNAs that are replicated, transcribed and translated. In addition, Nsp12 is a subunit of the viral RNA capping enzyme that catalyzes the RNA guanylyltransferase reaction for genomic and sub-genomic RNAs. The kinase-like NiRAN domain of NSP12 transfers RNA to the amino terminus of NSP9, forming a covalent RNA-protein intermediate. Subsequently, the NiRAN domain transfers RNA to GDP, and forms the core cap structure GpppA-RNA. In terms of biological role, multi-functional protein with a zinc-binding domain in N-terminus displaying RNA and DNA duplex-unwinding activities with 5' to 3' polarity. Activity of helicase is dependent on magnesium. Its function is as follows. Plays a role in viral RNA synthesis through two distinct activities. The N7-guanine methyltransferase activity plays a role in the formation of the cap structure GpppA-RNA. The proofreading exoribonuclease reduces the sensitivity of the virus to RNA mutagens during replication. This activity acts on both ssRNA and dsRNA in a 3'-5' direction. Functionally, plays a role in viral transcription/replication and prevents the simultaneous activation of host cell dsRNA sensors, such as MDA5/IFIH1, OAS, and PKR. Acts by degrading the 5'-polyuridines generated during replication of the poly(A) region of viral genomic and subgenomic RNAs. Catalyzes a two-step reaction in which a 2'3'-cyclic phosphate (2'3'-cP) is first generated by 2'-O transesterification, which is then hydrolyzed to a 3'-phosphate (3'-P). If not degraded, poly(U) RNA would hybridize with poly(A) RNA tails and activate host dsRNA sensors. Methyltransferase that mediates mRNA cap 2'-O-ribose methylation to the 5'-cap structure of viral mRNAs. N7-methyl guanosine cap is a prerequisite for binding of nsp16. Therefore plays an essential role in viral mRNAs cap methylation which is essential to evade immune system. The chain is Replicase polyprotein 1ab (rep) from Tylonycteris pachypus (Lesser bamboo bat).